The chain runs to 525 residues: DNA polymerase epsilon subunit 2 (525 aa).

It belongs to the DNA polymerase epsilon subunit B family. Component of the epsilon DNA polymerase complex consisting of four subunits: the catalytic subunit PolE1/DNApol-epsilon255 and the accessory subunits PolE2/DNApol-epsilon58, Chrac-14/DNApolE3 and PolE4.

Its subcellular location is the nucleus. Functionally, accessory component of the DNA polymerase epsilon complex. Participates in DNA repair and in chromosomal DNA replication. Has a role in the entrance and progression through S phase. Has a role in endoreplication. Essential for viability and tissue development. This Drosophila melanogaster (Fruit fly) protein is DNA polymerase epsilon subunit 2.